We begin with the raw amino-acid sequence, 395 residues long: Subtilisin-like protease 9 (395 aa).

The N-terminal stretch at 1 to 20 is a signal peptide; sequence MGFFRTLFSFSIFALSLADT. A propeptide spanning residues 21–120 is cleaved from the precursor; sequence SKFIGLDDVD…ADRVVKMAAL (100 aa). An Inhibitor I9 domain is found at 36 to 117; that stretch reads SYIVVMKGAV…YVEADRVVKM (82 aa). In terms of domain architecture, Peptidase S8 spans 128–395; the sequence is SWGLGRISHK…RRLLYNGSGA (268 aa). Residues Asp160 and His191 each act as charge relay system in the active site. N-linked (GlcNAc...) asparagine glycosylation is present at Asn252. Catalysis depends on Ser341, which acts as the Charge relay system. N-linked (GlcNAc...) asparagine glycosylation occurs at Asn391.

It belongs to the peptidase S8 family.

The protein localises to the secreted. In terms of biological role, secreted subtilisin-like serine protease with keratinolytic activity that contributes to pathogenicity. The polypeptide is Subtilisin-like protease 9 (SUB9) (Arthroderma otae (strain ATCC MYA-4605 / CBS 113480) (Microsporum canis)).